The primary structure comprises 385 residues: MDELNINFDKYKNIRRTMGRELIDLNPIQRGGELPVESKKAIYEYWDGYSVCDYCGGRLDKVETPPICEYLHDVSKFLGMDFTRPTHGARESKFIVMHSVCNEGDFVVLDGNAHYTSFVALERAKLNSEIVEHDGYPTFRVNPEKYAEVIDNLEDKNKPIGLILLTHVDGNYGNLADAEKVGKIAKQKGYPFLLNCAYSVGRLPVNGKKLNADFLAISGHKSMASASPCGLVSIKGEYADKVFRTSKTHPVKEIEMLGCTSRGAPLISLMASFSHVAERVKNWDNEVKKTRFVVDELEKIGFNQLGIKPKQHDLIKFETPILDEIAQKDKRRGYFFYEELKKRGIGGIKRGTTKEIKMSVYGLSWEQVRYVVDNIKEIVEQGNNI.

Pyridoxal 5'-phosphate-binding positions include A89–R90, N195, and S218–H220. N6-(pyridoxal phosphate)lysine is present on K221.

Belongs to the SepCysS family. Homodimer. Interacts with SepRS. The cofactor is pyridoxal 5'-phosphate.

It catalyses the reaction O-phospho-L-seryl-tRNA(Cys) + hydrogen sulfide + H(+) = L-cysteinyl-tRNA(Cys) + phosphate. In terms of biological role, converts O-phospho-L-seryl-tRNA(Cys) (Sep-tRNA(Cys)) to L-cysteinyl-tRNA(Cys) (Cys-tRNA(Cys)). The chain is O-phospho-L-seryl-tRNA:Cys-tRNA synthase from Methanococcus aeolicus (strain ATCC BAA-1280 / DSM 17508 / OCM 812 / Nankai-3).